We begin with the raw amino-acid sequence, 410 residues long: Ribosomal protein S6 kinase-related protein (410 aa).

In terms of domain architecture, Protein kinase spans 107–274 (LKILGLVAKG…GTLQYMAPEV (168 aa)). ATP contacts are provided by residues 113-121 (VAKGSFGTV) and Lys136. Asp229 functions as the Proton acceptor in the catalytic mechanism.

It belongs to the protein kinase superfamily. Ser/Thr protein kinase family.

It carries out the reaction L-seryl-[protein] + ATP = O-phospho-L-seryl-[protein] + ADP + H(+). It catalyses the reaction L-threonyl-[protein] + ATP = O-phospho-L-threonyl-[protein] + ADP + H(+). This is Ribosomal protein S6 kinase-related protein from Homo sapiens (Human).